The sequence spans 124 residues: Small ribosomal subunit protein uS12c (124 aa).

Belongs to the universal ribosomal protein uS12 family. In terms of assembly, part of the 30S ribosomal subunit.

The protein resides in the plastid. It localises to the chloroplast. Its function is as follows. With S4 and S5 plays an important role in translational accuracy. Located at the interface of the 30S and 50S subunits. In Cyanidium caldarium (Red alga), this protein is Small ribosomal subunit protein uS12c (rps12).